A 247-amino-acid polypeptide reads, in one-letter code: ATP synthase subunit a, chloroplastic (247 aa).

A run of 5 helical transmembrane segments spans residues 38–58, 95–115, 134–154, 199–219, and 220–240; these read QVLI…TLAV, VPFI…GALL, INTT…AGLT, LVVV…VMFL, and GLFT…AYIG.

This sequence belongs to the ATPase A chain family. As to quaternary structure, F-type ATPases have 2 components, CF(1) - the catalytic core - and CF(0) - the membrane proton channel. CF(1) has five subunits: alpha(3), beta(3), gamma(1), delta(1), epsilon(1). CF(0) has four main subunits: a, b, b' and c.

It is found in the plastid. Its subcellular location is the chloroplast thylakoid membrane. Key component of the proton channel; it plays a direct role in the translocation of protons across the membrane. This chain is ATP synthase subunit a, chloroplastic, found in Guizotia abyssinica (Niger).